A 478-amino-acid chain; its full sequence is 3-isopropylmalate dehydratase large subunit (478 aa).

The [4Fe-4S] cluster site is built by C357, C418, and C421.

This sequence belongs to the aconitase/IPM isomerase family. LeuC type 1 subfamily. As to quaternary structure, heterodimer of LeuC and LeuD. Requires [4Fe-4S] cluster as cofactor.

It carries out the reaction (2R,3S)-3-isopropylmalate = (2S)-2-isopropylmalate. It functions in the pathway amino-acid biosynthesis; L-leucine biosynthesis; L-leucine from 3-methyl-2-oxobutanoate: step 2/4. In terms of biological role, catalyzes the isomerization between 2-isopropylmalate and 3-isopropylmalate, via the formation of 2-isopropylmaleate. This Novosphingobium aromaticivorans (strain ATCC 700278 / DSM 12444 / CCUG 56034 / CIP 105152 / NBRC 16084 / F199) protein is 3-isopropylmalate dehydratase large subunit.